The following is a 124-amino-acid chain: Non-specific lipid-transfer protein (124 aa).

Residues 1 to 26 (MANSGVMKLVCLVLACMVVAAPLAEA) form the signal peptide. 4 disulfide bridges follow: Cys-30/Cys-77, Cys-40/Cys-54, Cys-55/Cys-100, and Cys-75/Cys-114.

This sequence belongs to the plant LTP family.

Functionally, plant non-specific lipid-transfer proteins transfer phospholipids as well as galactolipids across membranes. May play a role in wax or cutin deposition in the cell walls of expanding epidermal cells and certain secretory tissues. The sequence is that of Non-specific lipid-transfer protein from Macadamia integrifolia (Macadamia nut).